Consider the following 427-residue polypeptide: rRNA-processing protein EBP2 (427 aa).

Basic and acidic residues-rich tracts occupy residues 29–40 and 49–65; these read KKKSQELKKEEP and KKLE…KEVA. Residues 29–190 form a disordered region; it reads KKKSQELKKE…FDSDADVVPH (162 aa). The stretch at 45–174 forms a coiled coil; it reads ASNLKKLEKK…KEEQEEEQDV (130 aa). A compositionally biased stretch (basic residues) spans 79–88; that stretch reads KEKRKLKKEL. Residues 89–105 are compositionally biased toward basic and acidic residues; sequence KKMQEQDATEAQKHMSG. Phosphoserine is present on serine 104. Residues 106–126 show a composition bias toward acidic residues; that stretch reads DEDESGDDREEEEEEEEEEEG. Over residues 127–138 the composition is skewed to basic and acidic residues; sequence RLDLEKLAKSDS. Acidic residues-rich tracts occupy residues 139–155 and 163–185; these read ESED…EDED and EEKE…DSDA. A phosphoserine mark is found at serine 177 and serine 183. 2 coiled-coil regions span residues 234-265 and 291-348; these read KDIY…KRLK and KLIE…KHNE. Residues 361 to 427 form a disordered region; that stretch reads EVEGKRFDRG…PGKSRRARRF (67 aa). Over residues 397–407 the composition is skewed to polar residues; sequence ATSSADVSGFS. The span at 409–427 shows a compositional bias: basic residues; sequence RKMKGKTNRPGKSRRARRF.

Belongs to the EBP2 family. As to quaternary structure, interacts with LOC1, NOP12, SIZ2, ULS1 and WSS1. Post-translationally, sumoylated.

The protein resides in the nucleus. Its subcellular location is the nucleolus. Its function is as follows. Required for the processing of the 27S pre-rRNA. Probably involved in the step of the processing of the 27 SA precursor into the 27 SB intermediate. In Saccharomyces cerevisiae (strain ATCC 204508 / S288c) (Baker's yeast), this protein is rRNA-processing protein EBP2 (EBP2).